Reading from the N-terminus, the 491-residue chain is Ketol-acid reductoisomerase (NADP(+)) (491 aa).

A KARI N-terminal Rossmann domain is found at 15-208; sequence AQLGKCRFMG…GGHRAGVLES (194 aa). NADP(+)-binding positions include 45 to 48, Arg-68, Arg-76, Ser-78, and 108 to 110; these read CGAQ and DKQ. His-132 is a catalytic residue. Gly-158 contacts NADP(+). KARI C-terminal knotted domains follow at residues 209 to 344 and 345 to 484; these read SFVA…TAPQ and YEGK…MTDM. Residues Asp-217, Glu-221, Glu-389, and Glu-393 each contribute to the Mg(2+) site. Substrate is bound at residue Ser-414.

It belongs to the ketol-acid reductoisomerase family. It depends on Mg(2+) as a cofactor.

The enzyme catalyses (2R)-2,3-dihydroxy-3-methylbutanoate + NADP(+) = (2S)-2-acetolactate + NADPH + H(+). It catalyses the reaction (2R,3R)-2,3-dihydroxy-3-methylpentanoate + NADP(+) = (S)-2-ethyl-2-hydroxy-3-oxobutanoate + NADPH + H(+). Its pathway is amino-acid biosynthesis; L-isoleucine biosynthesis; L-isoleucine from 2-oxobutanoate: step 2/4. It participates in amino-acid biosynthesis; L-valine biosynthesis; L-valine from pyruvate: step 2/4. Functionally, involved in the biosynthesis of branched-chain amino acids (BCAA). Catalyzes an alkyl-migration followed by a ketol-acid reduction of (S)-2-acetolactate (S2AL) to yield (R)-2,3-dihydroxy-isovalerate. In the isomerase reaction, S2AL is rearranged via a Mg-dependent methyl migration to produce 3-hydroxy-3-methyl-2-ketobutyrate (HMKB). In the reductase reaction, this 2-ketoacid undergoes a metal-dependent reduction by NADPH to yield (R)-2,3-dihydroxy-isovalerate. The polypeptide is Ketol-acid reductoisomerase (NADP(+)) (Escherichia coli O7:K1 (strain IAI39 / ExPEC)).